A 506-amino-acid chain; its full sequence is Histidine ammonia-lyase (506 aa).

A cross-link (5-imidazolinone (Ala-Gly)) is located at residues 144-146 (ASG). 2,3-didehydroalanine (Ser) is present on serine 145.

Belongs to the PAL/histidase family. In terms of processing, contains an active site 4-methylidene-imidazol-5-one (MIO), which is formed autocatalytically by cyclization and dehydration of residues Ala-Ser-Gly.

It localises to the cytoplasm. The catalysed reaction is L-histidine = trans-urocanate + NH4(+). It functions in the pathway amino-acid degradation; L-histidine degradation into L-glutamate; N-formimidoyl-L-glutamate from L-histidine: step 1/3. The chain is Histidine ammonia-lyase from Legionella pneumophila subsp. pneumophila (strain Philadelphia 1 / ATCC 33152 / DSM 7513).